The chain runs to 260 residues: tRNA (guanine-N(1)-)-methyltransferase (260 aa).

S-adenosyl-L-methionine is bound by residues G117 and L137–L142.

It belongs to the RNA methyltransferase TrmD family. As to quaternary structure, homodimer.

The protein resides in the cytoplasm. It carries out the reaction guanosine(37) in tRNA + S-adenosyl-L-methionine = N(1)-methylguanosine(37) in tRNA + S-adenosyl-L-homocysteine + H(+). Functionally, specifically methylates guanosine-37 in various tRNAs. This Cupriavidus metallidurans (strain ATCC 43123 / DSM 2839 / NBRC 102507 / CH34) (Ralstonia metallidurans) protein is tRNA (guanine-N(1)-)-methyltransferase.